Here is a 218-residue protein sequence, read N- to C-terminus: MKTEIQEIVTRLDQQSNKGEGGESMKWLFRPLLQMLAGGESVTIEDMATTTGKPVEEVKKVLQSLPSVEIDEQGRVVGLGLTLIPTPHHFTVDGKQLYAWCALDTLIFPALIGRSVNIESPCHSTGEPIRLNVEPDHIVSVEPSTAVVSIVTPDDMSSIRTAFCNEVHFFSSPNAAEDWLDQHPGGKVLSVEDAFELGRLMGTRYEESRPANGSCCDI.

This sequence belongs to the MerB family.

It carries out the reaction an alkylmercury + H(+) = an alkane + Hg(2+). In terms of biological role, cleaves the carbon-mercury bond of organomercurials such as phenylmercuric acetate. One product is Hg(2+), which is subsequently detoxified by the mercuric reductase. The polypeptide is Alkylmercury lyase (merB1) (Bacillus cereus).